Consider the following 254-residue polypeptide: Triosephosphate isomerase (254 aa).

A substrate-binding site is contributed by 12–14 (NWK). Histidine 99 (electrophile) is an active-site residue. Glutamate 169 serves as the catalytic Proton acceptor. Residues glycine 175, serine 214, and 235–236 (GG) each bind substrate.

It belongs to the triosephosphate isomerase family. Homodimer.

The protein localises to the cytoplasm. The catalysed reaction is D-glyceraldehyde 3-phosphate = dihydroxyacetone phosphate. It functions in the pathway carbohydrate biosynthesis; gluconeogenesis. It participates in carbohydrate degradation; glycolysis; D-glyceraldehyde 3-phosphate from glycerone phosphate: step 1/1. Involved in the gluconeogenesis. Catalyzes stereospecifically the conversion of dihydroxyacetone phosphate (DHAP) to D-glyceraldehyde-3-phosphate (G3P). The protein is Triosephosphate isomerase of Xanthobacter autotrophicus (strain ATCC BAA-1158 / Py2).